Here is a 493-residue protein sequence, read N- to C-terminus: Glutamate--tRNA ligase (493 aa).

Positions 10 to 20 (PSPTGDPHVGT) match the 'HIGH' region motif. Positions 251 to 255 (KLSKR) match the 'KMSKS' region motif. Position 254 (lysine 254) interacts with ATP.

This sequence belongs to the class-I aminoacyl-tRNA synthetase family. Glutamate--tRNA ligase type 1 subfamily. Monomer.

It is found in the cytoplasm. It catalyses the reaction tRNA(Glu) + L-glutamate + ATP = L-glutamyl-tRNA(Glu) + AMP + diphosphate. Its function is as follows. Catalyzes the attachment of glutamate to tRNA(Glu) in a two-step reaction: glutamate is first activated by ATP to form Glu-AMP and then transferred to the acceptor end of tRNA(Glu). The polypeptide is Glutamate--tRNA ligase (Pseudomonas putida (strain GB-1)).